A 482-amino-acid chain; its full sequence is Glycogen synthase 2 (482 aa).

Lys-18 contacts ADP-alpha-D-glucose.

The protein belongs to the glycosyltransferase 1 family. Bacterial/plant glycogen synthase subfamily.

The enzyme catalyses [(1-&gt;4)-alpha-D-glucosyl](n) + ADP-alpha-D-glucose = [(1-&gt;4)-alpha-D-glucosyl](n+1) + ADP + H(+). Its pathway is glycan biosynthesis; glycogen biosynthesis. Functionally, synthesizes alpha-1,4-glucan chains using ADP-glucose. This Bradyrhizobium diazoefficiens (strain JCM 10833 / BCRC 13528 / IAM 13628 / NBRC 14792 / USDA 110) protein is Glycogen synthase 2.